Reading from the N-terminus, the 154-residue chain is 3-hydroxyacyl-[acyl-carrier-protein] dehydratase FabZ (154 aa).

H55 is an active-site residue.

The protein belongs to the thioester dehydratase family. FabZ subfamily.

Its subcellular location is the cytoplasm. The enzyme catalyses a (3R)-hydroxyacyl-[ACP] = a (2E)-enoyl-[ACP] + H2O. In terms of biological role, involved in unsaturated fatty acids biosynthesis. Catalyzes the dehydration of short chain beta-hydroxyacyl-ACPs and long chain saturated and unsaturated beta-hydroxyacyl-ACPs. This chain is 3-hydroxyacyl-[acyl-carrier-protein] dehydratase FabZ, found in Oleidesulfovibrio alaskensis (strain ATCC BAA-1058 / DSM 17464 / G20) (Desulfovibrio alaskensis).